We begin with the raw amino-acid sequence, 291 residues long: Undecaprenyl-diphosphatase (291 aa).

A run of 8 helical transmembrane segments spans residues M1 to F21, S48 to F68, L100 to I120, L124 to A144, I160 to F180, S201 to V221, A230 to I250, and I270 to S290.

Belongs to the UppP family.

It localises to the cell membrane. It carries out the reaction di-trans,octa-cis-undecaprenyl diphosphate + H2O = di-trans,octa-cis-undecaprenyl phosphate + phosphate + H(+). Its function is as follows. Catalyzes the dephosphorylation of undecaprenyl diphosphate (UPP). Confers resistance to bacitracin. The protein is Undecaprenyl-diphosphatase of Staphylococcus haemolyticus (strain JCSC1435).